The sequence spans 207 residues: Guanylate kinase (207 aa).

The Guanylate kinase-like domain maps to 5–184; that stretch reads GNLFIVSAPS…ALADLSAIIR (180 aa). Residue 12–19 participates in ATP binding; the sequence is APSGAGKS. A disordered region spans residues 30–49; that stretch reads PSDKQVSVSHTTRKPRPGEV.

It belongs to the guanylate kinase family.

The protein resides in the cytoplasm. The enzyme catalyses GMP + ATP = GDP + ADP. In terms of biological role, essential for recycling GMP and indirectly, cGMP. This is Guanylate kinase from Shewanella frigidimarina (strain NCIMB 400).